The following is a 138-amino-acid chain: Ig heavy chain V region TEPC 1017 (138 aa).

Residues 1–20 form the signal peptide; sequence MGWSYIILFLVATATDVHSQ. A framework-1 region spans residues 21-49; sequence VQLQQPGAELVKPGASVQLSCKASGHTFT. C41 and C115 are oxidised to a cystine. The segment at 50–54 is complementarity-determining-1; it reads NYWIH. The framework-2 stretch occupies residues 55–68; sequence WVKQRPGQGLEWIG. The tract at residues 69 to 85 is complementarity-determining-2; sequence EINPNDGRSNYNEKFKN. Residues 86-117 form a framework-3 region; that stretch reads KATLTVDKSSSTAYMQLSSLTPEEFAVYYCAR. Residues 118–127 are complementarity-determining-3; the sequence is SDGYYDWFVY. A framework-4 region spans residues 128 to 138; that stretch reads WGQGTLVTFSA.

The chain is Ig heavy chain V region TEPC 1017 from Mus musculus (Mouse).